Here is an 83-residue protein sequence, read N- to C-terminus: Three-finger toxin MALT0066C (83 aa).

The N-terminal stretch at 1-21 is a signal peptide; the sequence is MKTLLLTLVVVTIVCLDFGHT. 4 disulfides stabilise this stretch: cysteine 24–cysteine 45, cysteine 38–cysteine 62, cysteine 64–cysteine 75, and cysteine 76–cysteine 81.

This sequence belongs to the three-finger toxin family. Short-chain subfamily. Type I alpha-neurotoxin sub-subfamily. In terms of assembly, dimer. As to expression, expressed by the venom gland.

The protein localises to the secreted. In terms of biological role, binds to muscle nicotinic acetylcholine receptor (nAChR) and inhibit acetylcholine from binding to the receptor, thereby impairing neuromuscular transmission. This Micrurus altirostris (Uruguayan coral snake) protein is Three-finger toxin MALT0066C.